The chain runs to 295 residues: MEKVVGTDRVKQGMAQMQKGGVIMDVINAEQAKIAEEAGAVAVMALERVPSDIRAAGGVARMADPTVTEEVLNAVSIPVMAKARIGHIVEAKVLEAMGVDYIDESEVLTPADEVYHLNKRDFTVPFVCGARDLGEAARRIGEGASMIRTKGEPGTGNIVEAVRHMRKMQAQIKQVAHMSTDELMTEAKQLGAPYELLLHIKETGQLPVVNFAAGGIATPADAALMMHLGADGVFVGSGIFKSDNPEKFARAIVEATTHYTDYERIAELSKNLGSAMKGIDVATLAPAERMQDRGW.

A D-ribose 5-phosphate-binding site is contributed by Asp25. The Schiff-base intermediate with D-ribose 5-phosphate role is filled by Lys82. Gly154 serves as a coordination point for D-ribose 5-phosphate. Arg166 lines the D-glyceraldehyde 3-phosphate pocket. D-ribose 5-phosphate-binding positions include Gly215 and 236-237 (GS).

This sequence belongs to the PdxS/SNZ family. In the presence of PdxT, forms a dodecamer of heterodimers.

The catalysed reaction is aldehydo-D-ribose 5-phosphate + D-glyceraldehyde 3-phosphate + L-glutamine = pyridoxal 5'-phosphate + L-glutamate + phosphate + 3 H2O + H(+). It participates in cofactor biosynthesis; pyridoxal 5'-phosphate biosynthesis. In terms of biological role, catalyzes the formation of pyridoxal 5'-phosphate from ribose 5-phosphate (RBP), glyceraldehyde 3-phosphate (G3P) and ammonia. The ammonia is provided by the PdxT subunit. Can also use ribulose 5-phosphate and dihydroxyacetone phosphate as substrates, resulting from enzyme-catalyzed isomerization of RBP and G3P, respectively. The polypeptide is Pyridoxal 5'-phosphate synthase subunit PdxS (Shouchella clausii (strain KSM-K16) (Alkalihalobacillus clausii)).